A 390-amino-acid chain; its full sequence is MSPRSTLRSPLPSRTARSSASSDTPSPGADRQDRMSKAKELFVLCDKEGKGFITKRDMQRLQQELPLSPEQLESVFESLDRDRNGYLTPLEFHTGLGELVGSGPEEKVRSAGEIVGEEREEPTEIRFTQILMELGADKLFKDQWELCGLWCELQRDKPELLGVLEEVLSYTVSHLQDALKEKDNLEHALRRREEDHDRVVRSMYEDMESQLKEERERRQALDSMRQGDKKEQLLHELRTREQELEFTLTKQRELESRINSLSSDQADARGENRRLQNVNQQLQDQLEQSREELQNSLSQLQQLQNTIKLQQRGKEREVLKVSRNMQKERESLVRQLELLRDMNKRLRDDKDAHQAQKMVSQKHSFTPPTYYPACRCVHNFSPWPRSIYPY.

The segment covering 1–27 has biased composition (low complexity); it reads MSPRSTLRSPLPSRTARSSASSDTPSP. Positions 1–37 are disordered; sequence MSPRSTLRSPLPSRTARSSASSDTPSPGADRQDRMSK. EF-hand domains lie at 33-66 and 67-102; these read DRMSKAKELFVLCDKEGKGFITKRDMQRLQQELP and LSPEQLESVFESLDRDRNGYLTPLEFHTGLGELVGS. Residues Asp-80, Asp-82, Asn-84, Tyr-86, and Glu-91 each coordinate Ca(2+). The stretch at 173-357 forms a coiled coil; the sequence is SHLQDALKEK…DDKDAHQAQK (185 aa). The tract at residues 206-234 is disordered; it reads DMESQLKEERERRQALDSMRQGDKKEQLL.

This sequence belongs to the EFCAB4 family.

In Danio rerio (Zebrafish), this protein is EF-hand calcium-binding domain-containing protein 4A (cracr2b).